We begin with the raw amino-acid sequence, 554 residues long: CTP synthase (554 aa).

An amidoligase domain region spans residues 1 to 265 (MTPLIFVTGG…DELVIVQFKL (265 aa)). Ser-13 provides a ligand contact to CTP. Ser-13 provides a ligand contact to UTP. ATP is bound by residues 14-19 (SLGKGI) and Asp-71. Mg(2+)-binding residues include Asp-71 and Glu-139. Residues 146–148 (DIE), 186–191 (KTKPTQ), and Lys-222 each bind CTP. UTP contacts are provided by residues 186 to 191 (KTKPTQ) and Lys-222. Residues 292–545 (TIAVVGKYVD…VRAAREKKAG (254 aa)) form the Glutamine amidotransferase type-1 domain. Gly-353 is a binding site for L-glutamine. Cys-380 serves as the catalytic Nucleophile; for glutamine hydrolysis. Residues 381-384 (YGMQ), Glu-404, and Arg-471 each bind L-glutamine. Residues His-518 and Glu-520 contribute to the active site.

This sequence belongs to the CTP synthase family. Homotetramer.

The catalysed reaction is UTP + L-glutamine + ATP + H2O = CTP + L-glutamate + ADP + phosphate + 2 H(+). The enzyme catalyses L-glutamine + H2O = L-glutamate + NH4(+). It catalyses the reaction UTP + NH4(+) + ATP = CTP + ADP + phosphate + 2 H(+). It functions in the pathway pyrimidine metabolism; CTP biosynthesis via de novo pathway; CTP from UDP: step 2/2. Its activity is regulated as follows. Allosterically activated by GTP, when glutamine is the substrate; GTP has no effect on the reaction when ammonia is the substrate. The allosteric effector GTP functions by stabilizing the protein conformation that binds the tetrahedral intermediate(s) formed during glutamine hydrolysis. Inhibited by the product CTP, via allosteric rather than competitive inhibition. Functionally, catalyzes the ATP-dependent amination of UTP to CTP with either L-glutamine or ammonia as the source of nitrogen. Regulates intracellular CTP levels through interactions with the four ribonucleotide triphosphates. The polypeptide is CTP synthase (Xanthomonas oryzae pv. oryzae (strain MAFF 311018)).